The primary structure comprises 338 residues: Ketol-acid reductoisomerase (NADP(+)) (338 aa).

The region spanning 1-181 (MNVFYDKDAD…GGGRAGIIET (181 aa)) is the KARI N-terminal Rossmann domain. Residues 24 to 27 (YGSQ), R47, and S52 each bind NADP(+). H107 is a catalytic residue. G133 is a binding site for NADP(+). The region spanning 182–327 (NFREETETDL…AKLRAMMPWI (146 aa)) is the KARI C-terminal knotted domain. Residues D190, E194, E226, and E230 each contribute to the Mg(2+) site. Residue S251 participates in substrate binding.

This sequence belongs to the ketol-acid reductoisomerase family. Requires Mg(2+) as cofactor.

The enzyme catalyses (2R)-2,3-dihydroxy-3-methylbutanoate + NADP(+) = (2S)-2-acetolactate + NADPH + H(+). The catalysed reaction is (2R,3R)-2,3-dihydroxy-3-methylpentanoate + NADP(+) = (S)-2-ethyl-2-hydroxy-3-oxobutanoate + NADPH + H(+). Its pathway is amino-acid biosynthesis; L-isoleucine biosynthesis; L-isoleucine from 2-oxobutanoate: step 2/4. It participates in amino-acid biosynthesis; L-valine biosynthesis; L-valine from pyruvate: step 2/4. In terms of biological role, involved in the biosynthesis of branched-chain amino acids (BCAA). Catalyzes an alkyl-migration followed by a ketol-acid reduction of (S)-2-acetolactate (S2AL) to yield (R)-2,3-dihydroxy-isovalerate. In the isomerase reaction, S2AL is rearranged via a Mg-dependent methyl migration to produce 3-hydroxy-3-methyl-2-ketobutyrate (HMKB). In the reductase reaction, this 2-ketoacid undergoes a metal-dependent reduction by NADPH to yield (R)-2,3-dihydroxy-isovalerate. This Burkholderia multivorans (strain ATCC 17616 / 249) protein is Ketol-acid reductoisomerase (NADP(+)).